The sequence spans 94 residues: MSRSVKKGPYIQEVLLKRINEMNKNGEKKVLKTWSRSSTIFPQMIGHTIAVHDGRKHVPVYITEDMVGHKLGEFVLTRTYRGHDDKSEKSSRLR.

The protein belongs to the universal ribosomal protein uS19 family.

Functionally, protein S19 forms a complex with S13 that binds strongly to the 16S ribosomal RNA. The protein is Small ribosomal subunit protein uS19 of Clostridium botulinum (strain Langeland / NCTC 10281 / Type F).